Here is a 196-residue protein sequence, read N- to C-terminus: Pantothenic acid transporter PanT (196 aa).

6 helical membrane passes run 10–30 (AILA…QFVI), 35–55 (FPVK…ILGW), 58–78 (GAFL…IVTT), 99–119 (WGLF…YFVY), 131–151 (AAFA…FLFF), and 161–181 (YLLG…AVIL).

In terms of assembly, in E.coli forms a stable energy-coupling factor (ECF) transporter complex composed of 2 membrane-embedded substrate-binding protein (S component), 2 ATP-binding proteins (A and A' components) and 2 transmembrane proteins (T component), probably with a stoichiometry of 2:1:1:2. May be able to interact with more than 1 S component at a time.

The protein localises to the cell membrane. In terms of biological role, probably a pantothenic acid-binding protein that interacts with the energy-coupling factor (ECF) ABC-transporter complex. Unlike classic ABC transporters this ECF transporter provides the energy necessary to transport a number of different substrates. The substrates themselves are bound by transmembrane, not extracytoplasmic soluble proteins. The polypeptide is Pantothenic acid transporter PanT (panT) (Lactococcus lactis subsp. cremoris (strain MG1363)).